Here is a 512-residue protein sequence, read N- to C-terminus: Beta-glucosidase 44 (512 aa).

The N-terminal stretch at 1 to 23 is a signal peptide; it reads MRHLSSPPWPLLLLLLLSSFTSG. Gln58 serves as a coordination point for a beta-D-glucoside. A glycan (N-linked (GlcNAc...) asparagine) is linked at Asn86. Residues His159 and 204–205 each bind a beta-D-glucoside; that span reads NE. The Proton donor role is filled by Glu205. An intrachain disulfide couples Cys224 to Cys231. N-linked (GlcNAc...) asparagine glycosylation is present at Asn230. Residues Tyr347 and Glu419 each coordinate a beta-D-glucoside. Glu419 serves as the catalytic Nucleophile. Residue Asn427 is glycosylated (N-linked (GlcNAc...) asparagine). Residues Trp466, 473–474, and Phe482 each bind a beta-D-glucoside; that span reads EW.

This sequence belongs to the glycosyl hydrolase 1 family. Homodimer.

The protein localises to the secreted. The catalysed reaction is Hydrolysis of terminal, non-reducing beta-D-glucosyl residues with release of beta-D-glucose.. In terms of biological role, hydrolyzes p-nitrophenyl beta-D-glucoside, p-nitrophenyl beta-D-mannoside, cellobiose, 4-methylumbelliferyl-beta-D-glucoside, laminarin, amygdalin, esculin and gentiobiose. This is Beta-glucosidase 44 from Arabidopsis thaliana (Mouse-ear cress).